A 563-amino-acid polypeptide reads, in one-letter code: Probable trehalase (563 aa).

Residues Arg154, Trp161 to Asp162, Asn198, Arg207 to Gln209, Arg274 to Glu276, and Gly307 contribute to the substrate site. Catalysis depends on proton donor/acceptor residues Asp309 and Glu517. Position 532 (Glu532) interacts with substrate.

This sequence belongs to the glycosyl hydrolase 37 family.

The enzyme catalyses alpha,alpha-trehalose + H2O = alpha-D-glucose + beta-D-glucose. Functionally, involved in the regulation of trehalose content by hydrolyzing trehalose to glucose. In Oryza sativa subsp. japonica (Rice), this protein is Probable trehalase.